A 289-amino-acid polypeptide reads, in one-letter code: MIIVDRISEMQALMRQYHREGKTIGFVPTMGYLHEGHAALIDRARQENDIVVLSVFVNPLQFGPNEDFARYPRDFERDRHIAEQHGVDVLFHPEAGEMYPGPLTVQVVVKARTDVLCGRSRPGHFDGVATVLTKLFHIVMPDRAYFGLKDAQQVAVVDGLIRDFNFPIELVPVPTVREADGLAKSSRNVYLSPQEREEAPALYQALRAAAAAVDGGERSADAIRRLVKEHIEAHTHAEIDYVEVCSYPDLAPLETLHGTVLVAVAVRFASARLIDNIILELPKAHRQED.

Met-30–His-37 is a binding site for ATP. Residue His-37 is the Proton donor of the active site. Gln-61 lines the (R)-pantoate pocket. Gln-61 provides a ligand contact to beta-alanine. Residue Gly-147–Asp-150 coordinates ATP. Position 153 (Gln-153) interacts with (R)-pantoate. ATP-binding positions include Val-176 and Lys-184 to Arg-187.

This sequence belongs to the pantothenate synthetase family. As to quaternary structure, homodimer.

It localises to the cytoplasm. The enzyme catalyses (R)-pantoate + beta-alanine + ATP = (R)-pantothenate + AMP + diphosphate + H(+). Its pathway is cofactor biosynthesis; (R)-pantothenate biosynthesis; (R)-pantothenate from (R)-pantoate and beta-alanine: step 1/1. In terms of biological role, catalyzes the condensation of pantoate with beta-alanine in an ATP-dependent reaction via a pantoyl-adenylate intermediate. The sequence is that of Pantothenate synthetase from Geobacillus thermodenitrificans (strain NG80-2).